The following is a 97-amino-acid chain: Acylphosphatase (97 aa).

The Acylphosphatase-like domain maps to lysine 3 to tyrosine 97. Active-site residues include arginine 18 and asparagine 36.

It belongs to the acylphosphatase family.

The catalysed reaction is an acyl phosphate + H2O = a carboxylate + phosphate + H(+). The polypeptide is Acylphosphatase (acyP) (Lactococcus lactis subsp. lactis (strain IL1403) (Streptococcus lactis)).